A 305-amino-acid chain; its full sequence is Dermonecrotic toxin LiSicTox-alphaIA2aiii (305 aa).

Residues 1 to 17 (LPYIALILVCWSVLSQA) form the signal peptide. The propeptide occupies 18-25 (AQTDVEER). Residue His-37 is part of the active site. Residues Glu-57 and Asp-59 each coordinate Mg(2+). The active-site Nucleophile is the His-73. Disulfide bonds link Cys-77/Cys-83 and Cys-79/Cys-222. Asp-117 contacts Mg(2+). A glycan (N-linked (GlcNAc...) asparagine) is linked at Asn-282.

It belongs to the arthropod phospholipase D family. Class II subfamily. It depends on Mg(2+) as a cofactor. As to expression, expressed by the venom gland.

It localises to the secreted. The catalysed reaction is an N-(acyl)-sphingosylphosphocholine = an N-(acyl)-sphingosyl-1,3-cyclic phosphate + choline. It carries out the reaction an N-(acyl)-sphingosylphosphoethanolamine = an N-(acyl)-sphingosyl-1,3-cyclic phosphate + ethanolamine. The enzyme catalyses a 1-acyl-sn-glycero-3-phosphocholine = a 1-acyl-sn-glycero-2,3-cyclic phosphate + choline. It catalyses the reaction a 1-acyl-sn-glycero-3-phosphoethanolamine = a 1-acyl-sn-glycero-2,3-cyclic phosphate + ethanolamine. Functionally, dermonecrotic toxins cleave the phosphodiester linkage between the phosphate and headgroup of certain phospholipids (sphingolipid and lysolipid substrates), forming an alcohol (often choline) and a cyclic phosphate. This toxin acts on sphingomyelin (SM). It may also act on ceramide phosphoethanolamine (CPE), lysophosphatidylcholine (LPC) and lysophosphatidylethanolamine (LPE), but not on lysophosphatidylserine (LPS), and lysophosphatidylglycerol (LPG). It acts by transphosphatidylation, releasing exclusively cyclic phosphate products as second products. Induces dermonecrosis, hemolysis, increased vascular permeability, edema, inflammatory response, and platelet aggregation. The sequence is that of Dermonecrotic toxin LiSicTox-alphaIA2aiii from Loxosceles intermedia (Brown spider).